The following is an 869-amino-acid chain: Leucine--tRNA ligase (869 aa).

Residues 42–52 (PYPSGKLHMGH) carry the 'HIGH' region motif. The short motif at 624–628 (TMSKS) is the 'KMSKS' region element. Lys627 contributes to the ATP binding site.

The protein belongs to the class-I aminoacyl-tRNA synthetase family.

Its subcellular location is the cytoplasm. The enzyme catalyses tRNA(Leu) + L-leucine + ATP = L-leucyl-tRNA(Leu) + AMP + diphosphate. This chain is Leucine--tRNA ligase, found in Nitrosomonas europaea (strain ATCC 19718 / CIP 103999 / KCTC 2705 / NBRC 14298).